The primary structure comprises 412 residues: Type II methyltransferase M.Sau3AI (412 aa).

The SAM-dependent MTase C5-type domain occupies 4 to 402; that stretch reads IKVVELFAGV…NQIEKIDSIT (399 aa). Residue Cys85 is part of the active site.

It belongs to the class I-like SAM-binding methyltransferase superfamily. C5-methyltransferase family.

The enzyme catalyses a 2'-deoxycytidine in DNA + S-adenosyl-L-methionine = a 5-methyl-2'-deoxycytidine in DNA + S-adenosyl-L-homocysteine + H(+). In terms of biological role, a methylase that recognizes the double-stranded sequence 5'-GATC-3', methylates C-4 on both strands and protects the DNA from cleavage by the Sau3AI endonuclease. In Staphylococcus aureus, this protein is Type II methyltransferase M.Sau3AI (sau3AIM).